Here is a 230-residue protein sequence, read N- to C-terminus: Ion-translocating oxidoreductase complex subunit E (230 aa).

The next 6 helical transmembrane spans lie at Ala18 to Ala38, Leu39 to Leu59, Thr63 to Val83, Leu86 to Val106, Trp125 to Leu145, and Pro182 to Val202.

This sequence belongs to the NqrDE/RnfAE family. The complex is composed of six subunits: RsxA, RsxB, RsxC, RsxD, RsxE and RsxG.

It is found in the cell inner membrane. Part of a membrane-bound complex that couples electron transfer with translocation of ions across the membrane. Required to maintain the reduced state of SoxR. The protein is Ion-translocating oxidoreductase complex subunit E of Salmonella agona (strain SL483).